The chain runs to 300 residues: Probable acetyltransferase Rv3034c (300 aa).

A signal peptide spans 1 to 25; sequence MNVLSLGSSSGVVWGRVPITAPAGA.

Belongs to the transferase hexapeptide repeat family.

Its function is as follows. May be involved in the biosynthesis of 6-O-methylglucosyl-containing lipopolysaccharides (MGLP). In terms of biological role, regulates host peroxisome homeostasis in response to intracellular redox levels to favor mycobacterial infection in macrophage. Induces the expression of host peroxisome biogenesis and proliferation factors as well as peroxisome associated enzymes. Inhibits the induction of host pexophagy mechanism by down-regulating the expression of pexophagy associated proteins and adapter molecules in infected macrophages. However, during increased oxidative stress conditions, it induces degradation of dysfunctional and damaged peroxisomes. Regulation of peroxisome biogenesis and degradation is dependent upon host p-mTORC1 mediated signaling pathway. The protein is Probable acetyltransferase Rv3034c of Mycobacterium tuberculosis (strain ATCC 25618 / H37Rv).